We begin with the raw amino-acid sequence, 525 residues long: MVVYNTLTRRKEVFQPLAAGGSQSVSVGNSQGSAAPVAEEKPLVRMYVCGVTVYDLCHLGHARTYVVWDMVRRYLEWRGYRVKYVQNFTDVDDKILKRALERGESMQAVAERFIAEYFRDMDCLNIKRADFYPRATQSLQAMFQLIQSLELKGFAYRVRDPIRHQTDQSSLLQAGHQPETPASVQYSVYYSVRKFPDYGQLSGRKLEEMEAGASGRVGEEGAEKQDPFDFALWKAAPPSEPGFASPWGWGRPGWHIECSAMVRETLGDHIDIHAGGADLIFPHHENELAQSEPITGKPMAKYWMHNGFLNINGEKMSKSLGNFTTLRQALAVYHPMALRLFLLQTHYRSPIDLTEAAMQAASRGWETLQKGIHCAQHFCKEEKGSPDAEAMQAFQAAMDNDFGTPEALAIAFELAKELTREHNLFTHQGQTHLEPQALKQKSAALLEILATLGFCWPSFSEFEGSKEAATNGELNFKKIEELIAQRSAARKAKNFSEADRIRDQLKALGITLIDQKDGTTRWLRE.

Residue Cys-49 participates in Zn(2+) binding. The short motif at 51 to 61 (VTVYDLCHLGH) is the 'HIGH' region element. Residues Cys-258, His-283, and Glu-287 each contribute to the Zn(2+) site. A 'KMSKS' region motif is present at residues 315–319 (KMSKS). Lys-318 is an ATP binding site.

The protein belongs to the class-I aminoacyl-tRNA synthetase family. As to quaternary structure, monomer. It depends on Zn(2+) as a cofactor.

The protein localises to the cytoplasm. The enzyme catalyses tRNA(Cys) + L-cysteine + ATP = L-cysteinyl-tRNA(Cys) + AMP + diphosphate. The chain is Cysteine--tRNA ligase from Synechococcus sp. (strain JA-2-3B'a(2-13)) (Cyanobacteria bacterium Yellowstone B-Prime).